The chain runs to 54 residues: Apelin receptor early endogenous ligand (54 aa).

Positions 1 to 22 are cleaved as a signal peptide; the sequence is MRFQQFLFAFFIFIMSLLLISG. N-linked (GlcNAc...) asparagine glycosylation occurs at asparagine 27.

The protein belongs to the Elabela/Toddler family. As to quaternary structure, interacts with APLNR. Expressed in the intima of blood vessels. Expressed in endothelial cells in blood vessels in the heart and lung. Expressed in cytotrophoblasts and syncytiotrophoblasts of first-trimester placental tissue and term placentas (at protein level). Not detected in smooth muscle cells or cardiomyocytes (at protein level). Expressed in kidney. Expressed in blood vessels. Expressed in embryonic (ESCs) and induced (iPSCs) pluripotent stem cells. Most highly expressed in undifferentiated embryonic stem cell and is rapidly down-regulated during differentiation.

It is found in the secreted. Its subcellular location is the extracellular space. Its function is as follows. Peptide hormone that functions as endogenous ligand for the G-protein-coupled apelin receptor (APLNR/APJ), that plays a role in the regulation of normal cardiovascular function and fluid homeostasis. Functions as a balanced agonist activating both G(i) protein pathway and beta-arrestin pathway of APLNR. Downstream G proteins activation, apelin can inhibit cAMP production and activate key intracellular effectors such as ERKs. On the other hand, APLNR activation induces beta-arrestin recruitment to the membrane leading to desensitization and internalization of the receptor. Required for mesendodermal differentiation, blood vessels formation and heart morphogenesis during early development and for adult cardiovascular homeostasis. Acts as a motogen by promoting mesendodermal cell migration during gastrulation by binding and activating APLNR. Acts as an early embryonic regulator of cellular movement with a role in migration and development of cardiac progenitor cells. May act as a chemoattractant for the activation of angioblast migration toward the embryonic midline, i.e. the position of the future vessel formation, during vasculogenesis. Positively regulates sinus venosus (SV)-derived endothelial cells migration into the developing heart to promote coronary blood vessel sprouting. Plays a role in placental vascular development; promotes placental trophoblast invasion and spiral artery remodeling in the uterus. Involved in the regulation of maternal cardiovascular homeostasis to prevent gestational hypertension and for potent cardioprotective functions during heart failure. Mediates myocardial contractility in an ERK1/2-dependent manner. The chain is Apelin receptor early endogenous ligand from Homo sapiens (Human).